The following is a 545-amino-acid chain: Phenylalanine--tRNA ligase beta subunit (545 aa).

The B5 domain occupies 268–343 (FLHKIQNVRE…MSIGYNNLEP (76 aa)). Asp-321, Asp-327, Glu-330, and Asp-331 together coordinate Mg(2+).

This sequence belongs to the phenylalanyl-tRNA synthetase beta subunit family. Type 2 subfamily. In terms of assembly, tetramer of two alpha and two beta subunits. Mg(2+) serves as cofactor.

The protein localises to the cytoplasm. The enzyme catalyses tRNA(Phe) + L-phenylalanine + ATP = L-phenylalanyl-tRNA(Phe) + AMP + diphosphate + H(+). The protein is Phenylalanine--tRNA ligase beta subunit of Saccharolobus islandicus (strain L.S.2.15 / Lassen #1) (Sulfolobus islandicus).